Consider the following 532-residue polypeptide: BTB/POZ domain-containing protein 3 (532 aa).

The interval 23-54 (KNRSKKSSKKTNTGGGGGGSSSSSSSSSNSKL) is disordered. Positions 43–53 (SSSSSSSSNSK) are enriched in low complexity. The BTB domain occupies 130–200 (ADVHFVVGPP…IYCDEIDLAA (71 aa)). The region spanning 245-310 (FEEPDLTQRC…NWAEVECQRQ (66 aa)) is the BACK domain.

As to expression, expressed in visual cortex. Expressed in visual cortex layer IV neurons.

The protein localises to the cytoplasm. Its subcellular location is the cytosol. The protein resides in the nucleus. In terms of biological role, acts as a key regulator of dendritic field orientation during development of sensory cortex. Also directs dendrites toward active axon terminals when ectopically expressed. The polypeptide is BTB/POZ domain-containing protein 3 (BTBD3) (Mustela putorius furo (European domestic ferret)).